Consider the following 1964-residue polypeptide: Neurogenic locus notch homolog protein 4 (1964 aa).

An N-terminal signal peptide occupies residues 1-20; sequence MQPQLLLLLLLPLNFPVILT. EGF-like domains follow at residues 21-60, 61-112, 115-152, and 153-189; these read RELL…ETCQ, FPDP…DRCQ, LEEL…EQCQ, and LRDF…HTCE. Residues 21 to 1443 lie on the Extracellular side of the membrane; sequence RELLCGGSPE…TRPSANQLPW (1423 aa). Disulfide bonds link Cys-25–Cys-38, Cys-32–Cys-48, Cys-50–Cys-59, Cys-65–Cys-77, Cys-71–Cys-100, Cys-102–Cys-111, Cys-119–Cys-130, Cys-124–Cys-140, Cys-142–Cys-151, Cys-157–Cys-168, Cys-162–Cys-177, Cys-179–Cys-188, Cys-195–Cys-208, Cys-202–Cys-217, Cys-219–Cys-228, Cys-235–Cys-246, Cys-240–Cys-259, Cys-261–Cys-270, Cys-277–Cys-288, Cys-282–Cys-297, Cys-299–Cys-308, Cys-315–Cys-329, Cys-323–Cys-338, Cys-340–Cys-349, Cys-356–Cys-367, Cys-361–Cys-376, Cys-378–Cys-387, Cys-393–Cys-404, Cys-398–Cys-415, Cys-417–Cys-426, Cys-433–Cys-449, Cys-443–Cys-458, Cys-460–Cys-469, Cys-476–Cys-487, Cys-481–Cys-496, Cys-498–Cys-507, Cys-514–Cys-525, Cys-519–Cys-534, Cys-536–Cys-545, Cys-552–Cys-563, Cys-557–Cys-572, Cys-574–Cys-583, Cys-590–Cys-601, Cys-595–Cys-610, Cys-612–Cys-621, Cys-626–Cys-637, Cys-631–Cys-646, Cys-648–Cys-655, Cys-662–Cys-669, Cys-664–Cys-674, Cys-676–Cys-685, Cys-692–Cys-703, Cys-697–Cys-712, Cys-714–Cys-723, Cys-730–Cys-741, Cys-735–Cys-750, Cys-752–Cys-761, Cys-768–Cys-779, Cys-773–Cys-788, Cys-790–Cys-799, Cys-807–Cys-818, Cys-812–Cys-827, Cys-829–Cys-838, Cys-845–Cys-856, Cys-850–Cys-865, Cys-867–Cys-876, Cys-882–Cys-903, Cys-897–Cys-912, Cys-914–Cys-923, Cys-930–Cys-941, Cys-935–Cys-950, Cys-952–Cys-961, Cys-968–Cys-979, Cys-973–Cys-988, Cys-990–Cys-999, Cys-1006–Cys-1019, Cys-1011–Cys-1028, Cys-1030–Cys-1039, Cys-1046–Cys-1057, Cys-1051–Cys-1069, Cys-1071–Cys-1080, Cys-1087–Cys-1098, Cys-1092–Cys-1110, Cys-1112–Cys-1121, Cys-1130–Cys-1142, Cys-1136–Cys-1155, Cys-1157–Cys-1166, Cys-1174–Cys-1187, Cys-1183–Cys-1199, Cys-1210–Cys-1234, Cys-1216–Cys-1229, Cys-1225–Cys-1241, Cys-1247–Cys-1273, Cys-1255–Cys-1268, and Cys-1264–Cys-1280. Positions 191–229 constitute an EGF-like 5; calcium-binding domain; that stretch reads DINECFLEPGPCPQGTSCHNTLGSYQCLCPVGQEGPQCK. Positions 231–271 constitute an EGF-like 6 domain; that stretch reads RKGACPPGSCLNGGTCQLVPEGHSTFHLCLCPPGFTGLDCE. Positions 273 to 309 constitute an EGF-like 7; calcium-binding domain; that stretch reads NPDDCVRHQCQNGATCLDGLDTYTCLCPKTWKGWDCS. In terms of domain architecture, EGF-like 8; calcium-binding spans 311–350; that stretch reads DIDECEARGPPRCRNGGTCQNTAGSFHCVCVSGWGGAGCE. The region spanning 352-388 is the EGF-like 9; calcium-binding domain; it reads NLDDCAAATCAPGSTCIDRVGSFSCLCPPGRTGLLCH. The 39-residue stretch at 389-427 folds into the EGF-like 10 domain; it reads LEDMCLSQPCHVNAQCSTNPLTGSTLCICQPGYSGSTCH. The 42-residue stretch at 429-470 folds into the EGF-like 11; calcium-binding domain; it reads DLDECQMAQQGPSPCEHGGSCINTPGSFNCLCLPGYTGSRCE. The EGF-like 12; calcium-binding domain occupies 472 to 508; the sequence is DHNECLSQPCHPGSTCLDLLATFHCLCPPGLEGRLCE. The 37-residue stretch at 510–546 folds into the EGF-like 13; calcium-binding domain; it reads EVNECTSNPCLNQAACHDLLNGFQCLCLPGFTGARCE. An EGF-like 14; calcium-binding domain is found at 548–584; that stretch reads DMDECSSTPCANGGRCRDQPGAFYCECLPGFEGPHCE. Residues 586–622 enclose the EGF-like 15; calcium-binding domain; that stretch reads EVDECLSDPCPVGASCLDLPGAFFCLCRPGFTGQLCE. EGF-like domains lie at 623–656, 658–686, 688–724, 726–762, 764–800, 803–839, 841–877, 878–924, 926–962, 964–1000, 1002–1040, 1042–1081, 1083–1122, and 1126–1167; these read VPLC…PGCV, AEDN…PECE, ELGG…LTCS, EVTA…RHCQ, AVDH…LHCE, TNPS…SSCQ, LIDL…ALCD, FPLS…KLCQ, NVNP…QNCS, VLDA…LRCE, DVDE…QRCE, EMDL…PTCS, KALS…PDCL, and APPG…PRCQ. The N-linked (GlcNAc...) asparagine glycan is linked to Asn-711. An N-linked (GlcNAc...) asparagine glycan is attached at Asn-960. Asn-1139 is a glycosylation site (N-linked (GlcNAc...) asparagine). LNR repeat units follow at residues 1166–1209, 1210–1241, and 1247–1287; these read CQRP…PWKG, CPPH…GYDC, and CIPA…GEDS. Residues 1345–1369 form a disordered region; sequence EELSGARDSSSWERQAPPTQPLGKE. The helical transmembrane segment at 1444-1464 threads the bilayer; sequence PILCSPVVGVLLLALGALLVL. At 1465–1964 the chain is on the cytoplasmic side; the sequence is QLIRRRRREH…PLNSVVRNLN (500 aa). The segment at 1516–1535 is disordered; sequence VDEDGVAMCSGPEEGEAEET. ANK repeat units lie at residues 1628–1657, 1661–1691, 1695–1724, 1728–1757, and 1761–1790; these read TGET…NPNQ, AGRT…TVDA, DGTT…DVGA, RGKT…DKDA, and REQT…ARGL. The tract at residues 1879–1907 is disordered; that stretch reads RSGSCGGPTTRGRRFSAGSRGRRGARASQ.

Belongs to the NOTCH family. As to quaternary structure, heterodimer of a C-terminal fragment N(TM) and a N-terminal fragment N(EC) which are probably linked by disulfide bonds. Interacts with MAML1, MAML2 and MAML3 which act as transcriptional coactivators for NOTCH4. Synthesized in the endoplasmic reticulum as an inactive form which is proteolytically cleaved by a furin-like convertase in the trans-Golgi network before it reaches the plasma membrane to yield an active, ligand-accessible form. Cleavage results in a C-terminal fragment N(TM) and a N-terminal fragment N(EC). Following ligand binding, it is cleaved by TNF-alpha converting enzyme (TACE) to yield a membrane-associated intermediate fragment called notch extracellular truncation (NEXT). This fragment is then cleaved by presenilin dependent gamma-secretase to release a notch-derived peptide containing the intracellular domain (NICD) from the membrane. Post-translationally, phosphorylated. In terms of tissue distribution, highly expressed in lung, moderately in heart kidney, and at lower levels in the ovary and skeletal muscle. A very low expression is seen in the brain, intestine, liver and testis.

The protein localises to the cell membrane. The protein resides in the nucleus. Its function is as follows. Functions as a receptor for membrane-bound ligands Jagged1, Jagged2 and Delta1 to regulate cell-fate determination. Upon ligand activation through the released notch intracellular domain (NICD) it forms a transcriptional activator complex with RBPJ/RBPSUH and activates genes of the enhancer of split locus. Affects the implementation of differentiation, proliferation and apoptotic programs. May regulate branching morphogenesis in the developing vascular system. The protein is Neurogenic locus notch homolog protein 4 of Mus musculus (Mouse).